We begin with the raw amino-acid sequence, 248 residues long: Triosephosphate isomerase (248 aa).

9-11 contributes to the substrate binding site; that stretch reads NWK. Residue histidine 92 is the Electrophile of the active site. Glutamate 164 (proton acceptor) is an active-site residue. Substrate is bound by residues glycine 170, serine 209, and 230 to 231; that span reads GG.

This sequence belongs to the triosephosphate isomerase family. As to quaternary structure, homodimer.

The protein resides in the cytoplasm. It catalyses the reaction D-glyceraldehyde 3-phosphate = dihydroxyacetone phosphate. The protein operates within carbohydrate biosynthesis; gluconeogenesis. It participates in carbohydrate degradation; glycolysis; D-glyceraldehyde 3-phosphate from glycerone phosphate: step 1/1. In terms of biological role, involved in the gluconeogenesis. Catalyzes stereospecifically the conversion of dihydroxyacetone phosphate (DHAP) to D-glyceraldehyde-3-phosphate (G3P). This Thiobacillus denitrificans (strain ATCC 25259 / T1) protein is Triosephosphate isomerase.